We begin with the raw amino-acid sequence, 265 residues long: Iron(3+)-hydroxamate import ATP-binding protein FhuC (265 aa).

Positions 12–248 (FALRNISFRV…ETLEMIYGIP (237 aa)) constitute an ABC transporter domain. Residues 44-51 (GHNGSGKS) and 168-179 (CLLLDEPTSALD) contribute to the ATP site.

This sequence belongs to the ABC transporter superfamily. Iron (Fe3+)-hydroxamate importer (TC 3.A.1.14.7) family. In terms of assembly, the complex is composed of two ATP-binding proteins (FhuC), a transmembrane protein (FhuB) and a solute-binding protein (FhuD). FhuC interacts with FhuB.

Its subcellular location is the cell inner membrane. The enzyme catalyses ATP + H2O + Fe(3+)-hydroxamate complex-[hydroxamate-binding protein]Side 1 = ADP + phosphate + Fe(3+)-hydroxamate complexSide 2 + [hydroxamate-binding protein]Side 1.. With respect to regulation, ATPase activity is inhibited by vanadate. Part of the ABC transporter complex FhuCDB involved in iron(3+)-hydroxamate import. Responsible for energy coupling to the transport system. The protein is Iron(3+)-hydroxamate import ATP-binding protein FhuC (fhuC) of Escherichia coli (strain K12).